Here is a 106-residue protein sequence, read N- to C-terminus: MNKIRKGDDIIVLTGRDKGKRGKIALRKDDSYVLVEGINVVKKHTKPNPLKGTVGGIVEKSMPIHQSNVAIFNVATGKADRVGIKLAADGKRVRVYKSSGEEIKVA.

This sequence belongs to the universal ribosomal protein uL24 family. Part of the 50S ribosomal subunit.

One of two assembly initiator proteins, it binds directly to the 5'-end of the 23S rRNA, where it nucleates assembly of the 50S subunit. In terms of biological role, one of the proteins that surrounds the polypeptide exit tunnel on the outside of the subunit. This is Large ribosomal subunit protein uL24 from Albidiferax ferrireducens (strain ATCC BAA-621 / DSM 15236 / T118) (Rhodoferax ferrireducens).